Here is a 146-residue protein sequence, read N- to C-terminus: Transcriptional regulator MraZ (146 aa).

SpoVT-AbrB domains follow at residues 7–54 (HVTN…GPEL) and 83–126 (GVYV…DPQA).

It belongs to the MraZ family. In terms of assembly, forms oligomers.

It localises to the cytoplasm. The protein localises to the nucleoid. The chain is Transcriptional regulator MraZ from Rhizobium meliloti (strain 1021) (Ensifer meliloti).